The chain runs to 467 residues: Glutamate--tRNA ligase (467 aa).

The 'HIGH' region signature appears at 9–19 (PSPTGNLHIGS). The 'KMSKS' region motif lies at 237-241 (KISKR). Lys240 contacts ATP.

The protein belongs to the class-I aminoacyl-tRNA synthetase family. Glutamate--tRNA ligase type 1 subfamily. As to quaternary structure, monomer.

It localises to the cytoplasm. It carries out the reaction tRNA(Glu) + L-glutamate + ATP = L-glutamyl-tRNA(Glu) + AMP + diphosphate. Functionally, catalyzes the attachment of glutamate to tRNA(Glu) in a two-step reaction: glutamate is first activated by ATP to form Glu-AMP and then transferred to the acceptor end of tRNA(Glu). The chain is Glutamate--tRNA ligase from Buchnera aphidicola subsp. Acyrthosiphon pisum (strain APS) (Acyrthosiphon pisum symbiotic bacterium).